A 476-amino-acid chain; its full sequence is NAD(+) hydrolase ThsA (476 aa).

One can recognise a Deacetylase sirtuin-type domain in the interval 4–283 (NPIVELFIKD…QRIENNIKTK (280 aa)). NAD(+) is bound by residues A23, D114, and H152. Residue H152 is the Proton acceptor of the active site. The tract at residues 284-476 (TVFLSGSAVE…IIEFVEILSN (193 aa)) is SLOG (STALD) domain, binds 3'cADPR. Positions 289, 290, 326, 357, 371, 388, 399, and 403 each coordinate 3'cADPR.

Belongs to the soluble Thoeris ThsA family. As to quaternary structure, homotetramer formed by dimer of dimers; homooctamers are occasionally seen. Not seen to interact with ThsB. In the absence of the signal generated by ThsB, 63% monomer and 20% homotetramer; in the presence of the ThsB signal product 40% of the protein is dimeric. Homotetramer in solution; probably dimerizes via the N-terminal sirtuin-like domain.

The protein resides in the cytoplasm. It catalyses the reaction NAD(+) + H2O = ADP-D-ribose + nicotinamide + H(+). With respect to regulation, activated by a molecule generated by endogenous ThsB (AC J8G8J6) or ThsB' (AC J8CSK2); activation in vitro is 50-100x more sensitive to 3' cyclic ADP-D-ribose (3'cADPR) than 2'cADPR. 3'cADPR activates the NADase function of ThsA by binding to the SLOG domain, which changes its tetramer organization, allowing NAD to access the active site. Also activated by a signal molecule generated by B.dafuensis TIR1 (AC A0A5B8Z670) and TIR2 (AC A0A5B8Z260), and by BdTIR (AC I1GTC2), a plant protein involved in defense against bacterial infection. The signal produced by BdTIR is probably 2'cADPR, which activates this protein, the signal produced by endogenous ThsB' is probably 3'cADPR. In terms of biological role, NAD(+) hydrolyzing component (NADase) of the Thoeris antiviral defense system, composed of ThsA and ThsB. Activated by a signal molecule generated by endogenous ThsB (AC J8G8J6) or ThsB' (AC J8CSK2, probably 3'cADPR), by TIR1 and TIR2 from B.dafuensis or by BdTIR from B.distachyon (AC I1GTC2, probably 2'cADPR). Upon activation binds and hydrolyzes NAD(+), leading to cell death and inhibition of phage replication. Not seen to bind DNA. Activation is 50-100x more sensitive to 3' cyclic ADP-D-ribose (3'cADPR) than 2'cADPR. In another paper ThsA is not activated by any tested cADPR isomer, although it binds 3'cADPR; it was suggested the protein is already in a fully active state. Expression of ThsA and ThsB in B.subtilis (strain BEST7003) confers resistance to phages phi29, SBSphiC, SBSphiJ and SPO1. At multiplicity of infection (MOI) of 0.05 Thoeris-encoding cultures grow normally when infected with SPO1, at MOI 5 cultures collapse prematurely by 90 minutes post-infection, thus the phage are not able to complete a replication cycle. NAD(+) levels fall and ADP-D-ribose levels rise 60 minutes post-infection. Thoeris cultures eventually recover, but retain the same susceptibility to SPO1. The polypeptide is NAD(+) hydrolase ThsA (Bacillus cereus (strain MSX-D12)).